Consider the following 120-residue polypeptide: Large ribosomal subunit protein eL18 (120 aa).

This sequence belongs to the eukaryotic ribosomal protein eL18 family.

This is Large ribosomal subunit protein eL18 from Methanococcus maripaludis (strain DSM 14266 / JCM 13030 / NBRC 101832 / S2 / LL).